Consider the following 615-residue polypeptide: Ectoine/glycine betaine/proline transporter EctP (615 aa).

Transmembrane regions (helical) follow at residues 24–44 (FIFS…IALG), 62–82 (LGWM…GIFA), 102–122 (IVWF…FWGV), 156–176 (FGIH…YFIY), 207–227 (LAIV…VLQI), 240–260 (VSWV…ISVA), 275–295 (IAMA…LTLL), 329–349 (WTVF…MFVA), 360–380 (FIGG…SIFG), 417–437 (LTGI…ITSI), 463–483 (WACT…SSGI), and 489–509 (VVII…FSLL). 2 disordered regions span residues 524–562 (TRQW…LEHD) and 589–615 (PEEA…EYDI). Composition is skewed to basic and acidic residues over residues 526-540 (QWEK…EEHS) and 600-615 (KIVE…EYDI).

This sequence belongs to the BCCT transporter (TC 2.A.15) family.

Its subcellular location is the cell membrane. Involved in the uptake of osmoprotectants. Can transport ectoine, proline and glycine betaine. Na(+) is probably the coupling ion. In Corynebacterium glutamicum (strain ATCC 13032 / DSM 20300 / JCM 1318 / BCRC 11384 / CCUG 27702 / LMG 3730 / NBRC 12168 / NCIMB 10025 / NRRL B-2784 / 534), this protein is Ectoine/glycine betaine/proline transporter EctP.